A 587-amino-acid polypeptide reads, in one-letter code: Bifunctional lycopene cyclase/phytoene synthase (587 aa).

Residues 1-236 (MGLDYILVHV…IVFGLVCIDY (236 aa)) form a lycopene beta-cyclase region. The next 7 membrane-spanning stretches (helical) occupy residues 5–25 (YILV…LVYW), 35–55 (KIST…SYLV), 65–85 (NGVI…FFII), 91–111 (SLVY…GTVA), 116–136 (LIGA…LCFG), 145–165 (IITW…GFII), and 218–238 (LFFL…DYAI). Residues 243–587 (CELVQSPQAV…VAYRAMAWRK (345 aa)) are phytoene synthase.

This sequence in the N-terminal section; belongs to the lycopene beta-cyclase family. It in the C-terminal section; belongs to the phytoene/squalene synthase family.

The protein resides in the membrane. The enzyme catalyses all-trans-lycopene = gamma-carotene. The catalysed reaction is gamma-carotene = all-trans-beta-carotene. It catalyses the reaction 2 (2E,6E,10E)-geranylgeranyl diphosphate = 15-cis-phytoene + 2 diphosphate. It participates in carotenoid biosynthesis; beta-carotene biosynthesis. The protein operates within carotenoid biosynthesis; phytoene biosynthesis; all-trans-phytoene from geranylgeranyl diphosphate: step 1/1. In terms of biological role, bifunctional enzyme that catalyzes the reactions from geranylgeranyl diphosphate to phytoene (phytoene synthase) and lycopene to beta-carotene via the intermediate gamma-carotene (lycopene cyclase). The chain is Bifunctional lycopene cyclase/phytoene synthase from Aspergillus oryzae (strain ATCC 42149 / RIB 40) (Yellow koji mold).